The primary structure comprises 287 residues: 1-acyl-sn-glycerol-3-phosphate acyltransferase alpha (287 aa).

Residues 1–26 form the signal peptide; the sequence is MELWPGAGTLLLLLFLLLLLLLPTLW. Residues 27 to 37 lie on the Lumenal side of the membrane; it reads FCSPSAKYFFK. A helical membrane pass occupies residues 38–58; it reads MAFYNGWILFLAVLAIPVCAV. The Cytoplasmic portion of the chain corresponds to 59–127; the sequence is RGRNVENMKI…PGRCVPIAKR (69 aa). The HXXXXD motif signature appears at 104 to 109; sequence HQSSLD. The helical transmembrane segment at 128 to 148 threads the bilayer; it reads ELLWAGSAGLACWLAGVIFID. At 149–287 the chain is on the lumenal side; that stretch reads RKRTGDAISV…KPGGVGEAGL (139 aa). The EGTR motif signature appears at 178 to 181; the sequence is EGTR.

Belongs to the 1-acyl-sn-glycerol-3-phosphate acyltransferase family.

The protein resides in the endoplasmic reticulum membrane. It catalyses the reaction a 1-acyl-sn-glycero-3-phosphate + an acyl-CoA = a 1,2-diacyl-sn-glycero-3-phosphate + CoA. The enzyme catalyses 1-(9Z-octadecenoyl)-sn-glycero-3-phosphate + (9Z)-octadecenoyl-CoA = 1,2-di-(9Z-octadecenoyl)-sn-glycero-3-phosphate + CoA. It carries out the reaction 1-(9Z-octadecenoyl)-sn-glycero-3-phosphate + hexadecanoyl-CoA = 1-(9Z)-octadecenoyl-2-hexadecanoyl-sn-glycero-3-phosphate + CoA. The catalysed reaction is heptadecanoyl-CoA + 1-(9Z-octadecenoyl)-sn-glycero-3-phosphate = 1-(9Z)-octadecenoyl-2-heptadecanoyl-sn-glycero-3-phosphate + CoA. It catalyses the reaction 1-(9Z-octadecenoyl)-sn-glycero-3-phosphate + octadecanoyl-CoA = 1-(9Z-octadecenoyl)-2-octadecanoyl-sn-glycero-3-phosphate + CoA. The enzyme catalyses 1-(9Z-octadecenoyl)-sn-glycero-3-phosphate + (9Z,12Z)-octadecadienoyl-CoA = 1-(9Z)-octadecenoyl-2-(9Z,12Z)-octadecadienoyl-sn-glycero-3-phosphate + CoA. It carries out the reaction 1-(9Z-octadecenoyl)-sn-glycero-3-phosphate + tetradecanoyl-CoA = 1-(9Z)-octadecenoyl-2-tetradecanoyl-sn-glycero-3-phosphate + CoA. The catalysed reaction is pentadecanoyl-CoA + 1-(9Z-octadecenoyl)-sn-glycero-3-phosphate = 1-(9Z)-octadecenoyl-2-pentadecanoyl-sn-glycero-3-phosphate + CoA. It catalyses the reaction 1-hexadecanoyl-sn-glycero-3-phosphate + (9Z)-octadecenoyl-CoA = 1-hexadecanoyl-2-(9Z-octadecenoyl)-sn-glycero-3-phosphate + CoA. The enzyme catalyses 1-(9Z,12Z,15Z)-octadecatrienoyl-sn-glycero-3-phosphate + (9Z)-octadecenoyl-CoA = 1-(9Z,12Z,15Z)-octadecatrienoyl-2-(9Z)-octadecenoyl-sn-glycero-3-phosphate + CoA. It carries out the reaction 1-(6Z,9Z,12Z-octadecatrienoyl)-sn-glycero-3-phosphate + (9Z)-octadecenoyl-CoA = (6Z,9Z,12Z)-octadecatrienoyl-2-(9Z)-octadecenoyl-sn-glycero-3-phosphate + CoA. The catalysed reaction is 1-eicosanoyl-sn-glycero-3-phosphate + (9Z)-octadecenoyl-CoA = 1-eicosanoyl-2-(9Z)-octadecenoyl-sn-glycero-3-phosphate + CoA. It catalyses the reaction 1-tetradecanoyl-sn-glycerol 3-phosphate + (9Z)-octadecenoyl-CoA = 1-tetradecanoyl-2-(9Z)-octadecenoyl-sn-glycero-3-phosphate + CoA. The enzyme catalyses 1-(9Z-octadecenoyl)-sn-glycero-3-phosphate + (5Z,8Z,11Z,14Z)-eicosatetraenoyl-CoA = 1-(9Z)-octadecenoyl-2-(5Z,8Z,11Z,14Z)-eicosatetraenoyl-sn-glycero-3-phosphate + CoA. It carries out the reaction 1-(9Z-octadecenoyl)-sn-glycero-3-phosphate + dodecanoyl-CoA = 1-(9Z)-octadecenoyl-2-dodecanoyl-sn-glycero-3-phosphate + CoA. The catalysed reaction is (6Z)-octadecenoyl-CoA + 1-(9Z-octadecenoyl)-sn-glycero-3-phosphate = 1-(9Z)-octadecenoyl-2-(6Z)-octadecenoyl-sn-glycero-3-phosphate + CoA. It catalyses the reaction (11Z)-octadecenoyl-CoA + 1-(9Z-octadecenoyl)-sn-glycero-3-phosphate = 1-(9Z)-octadecenoyl-2-(11Z)-octadecenoyl-sn-glycero-3-phosphate + CoA. The enzyme catalyses (9Z)-hexadecenoyl-CoA + 1-(9Z-octadecenoyl)-sn-glycero-3-phosphate = 1-(9Z-octadecenoyl)-2-(9Z-hexadecenoyl)-sn-glycero-3-phosphate + CoA. It participates in phospholipid metabolism; CDP-diacylglycerol biosynthesis; CDP-diacylglycerol from sn-glycerol 3-phosphate: step 2/3. In terms of biological role, converts 1-acyl-sn-glycerol-3-phosphate (lysophosphatidic acid or LPA) into 1,2-diacyl-sn-glycerol-3-phosphate (phosphatidic acid or PA) by incorporating an acyl moiety at the sn-2 position of the glycerol backbone. This chain is 1-acyl-sn-glycerol-3-phosphate acyltransferase alpha (AGPAT1), found in Bos taurus (Bovine).